A 412-amino-acid chain; its full sequence is Lipoyl synthase, mitochondrial (412 aa).

The N-terminal 28 residues, 1-28 (MASIAPSLKRAHAPLRKALTASSTIRAF), are a transit peptide targeting the mitochondrion. [4Fe-4S] cluster-binding residues include C124, C129, C135, C155, C159, C162, and S372. The 224-residue stretch at 138–361 (GSDKNAATAT…NKRALDMGFL (224 aa)) folds into the Radical SAM core domain.

Belongs to the radical SAM superfamily. Lipoyl synthase family. It depends on [4Fe-4S] cluster as a cofactor.

Its subcellular location is the mitochondrion. The catalysed reaction is [[Fe-S] cluster scaffold protein carrying a second [4Fe-4S](2+) cluster] + N(6)-octanoyl-L-lysyl-[protein] + 2 oxidized [2Fe-2S]-[ferredoxin] + 2 S-adenosyl-L-methionine + 4 H(+) = [[Fe-S] cluster scaffold protein] + N(6)-[(R)-dihydrolipoyl]-L-lysyl-[protein] + 4 Fe(3+) + 2 hydrogen sulfide + 2 5'-deoxyadenosine + 2 L-methionine + 2 reduced [2Fe-2S]-[ferredoxin]. It participates in protein modification; protein lipoylation via endogenous pathway; protein N(6)-(lipoyl)lysine from octanoyl-[acyl-carrier-protein]: step 2/2. In terms of biological role, catalyzes the radical-mediated insertion of two sulfur atoms into the C-6 and C-8 positions of the octanoyl moiety bound to the lipoyl domains of lipoate-dependent enzymes, thereby converting the octanoylated domains into lipoylated derivatives. In Fusarium vanettenii (strain ATCC MYA-4622 / CBS 123669 / FGSC 9596 / NRRL 45880 / 77-13-4) (Fusarium solani subsp. pisi), this protein is Lipoyl synthase, mitochondrial.